Reading from the N-terminus, the 547-residue chain is Glucose-6-phosphate isomerase (547 aa).

The active-site Proton donor is the glutamate 351. Catalysis depends on residues histidine 382 and lysine 509.

The protein belongs to the GPI family.

The protein localises to the cytoplasm. It catalyses the reaction alpha-D-glucose 6-phosphate = beta-D-fructose 6-phosphate. It functions in the pathway carbohydrate biosynthesis; gluconeogenesis. Its pathway is carbohydrate degradation; glycolysis; D-glyceraldehyde 3-phosphate and glycerone phosphate from D-glucose: step 2/4. Catalyzes the reversible isomerization of glucose-6-phosphate to fructose-6-phosphate. The protein is Glucose-6-phosphate isomerase of Coxiella burnetii (strain Dugway 5J108-111).